A 459-amino-acid chain; its full sequence is Ribulose bisphosphate carboxylase large chain (459 aa).

The residue at position 4 (lysine 4) is an N6,N6,N6-trimethyllysine. Asparagine 113 and threonine 163 together coordinate substrate. The active-site Proton acceptor is the lysine 165. Residue lysine 167 coordinates substrate. Mg(2+)-binding residues include lysine 191, aspartate 193, and glutamate 194. N6-carboxylysine is present on lysine 191. Histidine 284 functions as the Proton acceptor in the catalytic mechanism. Substrate contacts are provided by arginine 285, histidine 317, and serine 369.

It belongs to the RuBisCO large chain family. Type I subfamily. Heterohexadecamer of 8 large chains and 8 small chains; disulfide-linked. The disulfide link is formed within the large subunit homodimers. The cofactor is Mg(2+). In terms of processing, the disulfide bond which can form in the large chain dimeric partners within the hexadecamer appears to be associated with oxidative stress and protein turnover.

It localises to the plastid. The protein localises to the chloroplast. The enzyme catalyses 2 (2R)-3-phosphoglycerate + 2 H(+) = D-ribulose 1,5-bisphosphate + CO2 + H2O. It carries out the reaction D-ribulose 1,5-bisphosphate + O2 = 2-phosphoglycolate + (2R)-3-phosphoglycerate + 2 H(+). Its function is as follows. RuBisCO catalyzes two reactions: the carboxylation of D-ribulose 1,5-bisphosphate, the primary event in carbon dioxide fixation, as well as the oxidative fragmentation of the pentose substrate in the photorespiration process. Both reactions occur simultaneously and in competition at the same active site. In Morus alba (White mulberry), this protein is Ribulose bisphosphate carboxylase large chain.